The sequence spans 506 residues: 2-isopropylmalate synthase (506 aa).

A Pyruvate carboxyltransferase domain is found at 4–266; sequence ILFMDTTLRD…QSSIILKEIK (263 aa). Residues D13, H201, H203, and N237 each contribute to the Mn(2+) site. The regulatory domain stretch occupies residues 390–506; it reads NIKQLQVHFV…KLKALLTLVK (117 aa).

It belongs to the alpha-IPM synthase/homocitrate synthase family. LeuA type 1 subfamily. Homodimer. It depends on Mn(2+) as a cofactor.

The protein localises to the cytoplasm. The enzyme catalyses 3-methyl-2-oxobutanoate + acetyl-CoA + H2O = (2S)-2-isopropylmalate + CoA + H(+). The protein operates within amino-acid biosynthesis; L-leucine biosynthesis; L-leucine from 3-methyl-2-oxobutanoate: step 1/4. Functionally, catalyzes the condensation of the acetyl group of acetyl-CoA with 3-methyl-2-oxobutanoate (2-ketoisovalerate) to form 3-carboxy-3-hydroxy-4-methylpentanoate (2-isopropylmalate). The polypeptide is 2-isopropylmalate synthase (Bacillus cytotoxicus (strain DSM 22905 / CIP 110041 / 391-98 / NVH 391-98)).